We begin with the raw amino-acid sequence, 85 residues long: Large ribosomal subunit protein bL27 (85 aa).

A disordered region spans residues 1 to 21; sequence MAHKKAGGSSRNGRDSEGRRL.

Belongs to the bacterial ribosomal protein bL27 family.

This is Large ribosomal subunit protein bL27 from Rhodospirillum rubrum (strain ATCC 11170 / ATH 1.1.1 / DSM 467 / LMG 4362 / NCIMB 8255 / S1).